A 144-amino-acid chain; its full sequence is 3-hydroxyacyl-[acyl-carrier-protein] dehydratase FabZ (144 aa).

His-48 is a catalytic residue.

This sequence belongs to the thioester dehydratase family. FabZ subfamily.

It localises to the cytoplasm. It catalyses the reaction a (3R)-hydroxyacyl-[ACP] = a (2E)-enoyl-[ACP] + H2O. In terms of biological role, involved in unsaturated fatty acids biosynthesis. Catalyzes the dehydration of short chain beta-hydroxyacyl-ACPs and long chain saturated and unsaturated beta-hydroxyacyl-ACPs. The sequence is that of 3-hydroxyacyl-[acyl-carrier-protein] dehydratase FabZ from Bacillus pumilus (strain SAFR-032).